Here is a 164-residue protein sequence, read N- to C-terminus: Large ribosomal subunit protein eL21x/eL21w (164 aa).

The protein belongs to the eukaryotic ribosomal protein eL21 family.

The sequence is that of Large ribosomal subunit protein eL21x/eL21w (RPL21E) from Arabidopsis thaliana (Mouse-ear cress).